The chain runs to 278 residues: Small ribosomal subunit protein uS3 (278 aa).

The region spanning 39 to 107 (LRKAISKKYV…KVQLNIVEIS (69 aa)) is the KH type-2 domain. The tract at residues 255 to 278 (AEIPAEEKPKRVVKKAENITKEEE) is disordered.

It belongs to the universal ribosomal protein uS3 family. As to quaternary structure, part of the 30S ribosomal subunit. Forms a tight complex with proteins S10 and S14.

In terms of biological role, binds the lower part of the 30S subunit head. Binds mRNA in the 70S ribosome, positioning it for translation. In Dehalococcoides mccartyi (strain ATCC BAA-2100 / JCM 16839 / KCTC 5957 / BAV1), this protein is Small ribosomal subunit protein uS3.